Here is a 217-residue protein sequence, read N- to C-terminus: Pyridoxine/pyridoxamine 5'-phosphate oxidase (217 aa).

Substrate-binding positions include arginine 13–tyrosine 16 and lysine 71. FMN-binding positions include arginine 66–lysine 71, tyrosine 81–threonine 82, lysine 88, and glutamine 110. Tyrosine 128, arginine 132, and serine 136 together coordinate substrate. FMN contacts are provided by residues glutamine 145–serine 146 and tryptophan 190. Arginine 196–histidine 198 contributes to the substrate binding site. Arginine 200 lines the FMN pocket.

Belongs to the pyridoxamine 5'-phosphate oxidase family. As to quaternary structure, homodimer. Requires FMN as cofactor.

The catalysed reaction is pyridoxamine 5'-phosphate + O2 + H2O = pyridoxal 5'-phosphate + H2O2 + NH4(+). The enzyme catalyses pyridoxine 5'-phosphate + O2 = pyridoxal 5'-phosphate + H2O2. Its pathway is cofactor metabolism; pyridoxal 5'-phosphate salvage; pyridoxal 5'-phosphate from pyridoxamine 5'-phosphate: step 1/1. It participates in cofactor metabolism; pyridoxal 5'-phosphate salvage; pyridoxal 5'-phosphate from pyridoxine 5'-phosphate: step 1/1. In terms of biological role, catalyzes the oxidation of either pyridoxine 5'-phosphate (PNP) or pyridoxamine 5'-phosphate (PMP) into pyridoxal 5'-phosphate (PLP). The chain is Pyridoxine/pyridoxamine 5'-phosphate oxidase from Edwardsiella ictaluri (strain 93-146).